We begin with the raw amino-acid sequence, 27 residues long: Conotoxin Bt9.2 (27 aa).

Intrachain disulfides connect Cys2–Cys16, Cys6–Cys19, and Cys12–Cys24. Pro13 is subject to 4-hydroxyproline.

In terms of tissue distribution, expressed by the venom duct.

The protein resides in the secreted. Probable neurotoxin that inhibits ion channels. In Conus betulinus (Beech cone), this protein is Conotoxin Bt9.2.